We begin with the raw amino-acid sequence, 366 residues long: Chorismate synthase (366 aa).

R48 lines the NADP(+) pocket. FMN is bound by residues 125-127, G285, 300-304, and R327; these read RSS and KPTPS.

This sequence belongs to the chorismate synthase family. It depends on FMNH2 as a cofactor.

It catalyses the reaction 5-O-(1-carboxyvinyl)-3-phosphoshikimate = chorismate + phosphate. It participates in metabolic intermediate biosynthesis; chorismate biosynthesis; chorismate from D-erythrose 4-phosphate and phosphoenolpyruvate: step 7/7. Functionally, catalyzes the anti-1,4-elimination of the C-3 phosphate and the C-6 proR hydrogen from 5-enolpyruvylshikimate-3-phosphate (EPSP) to yield chorismate, which is the branch point compound that serves as the starting substrate for the three terminal pathways of aromatic amino acid biosynthesis. This reaction introduces a second double bond into the aromatic ring system. In Methanococcoides burtonii (strain DSM 6242 / NBRC 107633 / OCM 468 / ACE-M), this protein is Chorismate synthase.